Reading from the N-terminus, the 1228-residue chain is MHEHKAELRLITVALNEASTDSPSFRASVNYFHTRMESLSSWMHSTVDYVENTYKPSFQDFQRIKETLFSQLLPSPILLSNGFVSNQPYTPLLVRDFTRDVSDLSNTVMKIILGDENSQYTAALSALSSDAINPYFNKRKTFEYYQRKYDSFLTDFLAATNDGNTLIPQNLQNETFKLVDIKHKYIEASLDLTEAISLMKVNLDKFLIETIDIVRKNNVITTKDTKDVIDITPELTETLKDWTDWIESNLQTLQALSSKLSEAKYAILKLSLARMKPSRLIQDYDLKSIQNLKFNLPKSISNGNNSEEKGLSGWLYMKTTVGHDPKRVVWVRRWCFLQNNVFGVFSLSPSKTYVEETDKFGILWITVEYLPKEPRNFCFKLRIQNPNCKTEEENTYIDIILQAESIDELKSWINTLTSHKRIALSIKEENDPRYQLARKKIEPQFFEFASSSSTSTDKLLTSFSSKTLTLVEELKKNYMSEDDIYSIIDNKAYHLRVISTPIATQLTHLALFSTFLSVSNYYPCATQANTWGTANWNDLSYLVNPLKGSSVHKPATVSNSSRFSVSYPDYYPYSLKVDDIQFRSIFFSVNHDFLQVPKELVLLRYSSVWCPNNKQKFASMAFVTLNHIYVYLNISGFSYLRRIDLLDIDSIEYDKSPKHVSSRMLHMQRGDGLRFNMSVFFTDRRAVASKLQFLIENKAMHIPKGEKEVLEIFQELDEEIENEKKIIKDNLSESEHYSKDYDYLLKSTYDHHFENTNETPMELMSRKLRLEREAWCYFQDNFKVGSKTLFHVLFGDKSQVFPSSLFLCKKGSNLNNNSYWERIRRAKEDASCQFELCRKLQFQLNRTSNFIKDLLWLKDDNDNFKLVLQQRVTKIKQGYYFEVEEGPIIVKFPLCHPLLLRVRFIIAECITSQGESLKKCDLAILYDFNYVESIDKLNTKVEKLWLFERIHLNWALRYCKLEHSEINRKTREYLKKFNDREKMSDVIKLCGFLGVLPKERIENDEKAGDFMQPVYINYDFLSLSKIFTKLTVFYLSSVIIKTMKVLLAMVMVIFKCFSKVNKTLYYCLLISAVTNLFFVGKSIHSYFSVKSAETLFQNYANGDQRGLQIMHRSLTVPDLNLLTRKMMDNDQENPVFKRFDEDKNAYQYKGTRQEIAIKRNQVLTELKILQNTEKELVQGSYRKFIITERDKCITTQNEIFDLWINDTKLQDYCMACFAEYNRLSAIPV.

Residues 1–1062 (MHEHKAELRL…IFKCFSKVNK (1062 aa)) lie on the Cytoplasmic side of the membrane. A PH domain is found at 308-421 (EKGLSGWLYM…WINTLTSHKR (114 aa)). Residues 773–978 (EAWCYFQDNF…KTREYLKKFN (206 aa)) form the VASt domain. A helical membrane pass occupies residues 1063–1083 (TLYYCLLISAVTNLFFVGKSI). Topologically, residues 1084 to 1228 (HSYFSVKSAE…EYNRLSAIPV (145 aa)) are lumenal. Residue Asn-1205 is glycosylated (N-linked (GlcNAc...) asparagine).

This sequence belongs to the SIP3 family.

It localises to the mitochondrion membrane. Its subcellular location is the endoplasmic reticulum membrane. Its function is as follows. Involved in mitochondrial fragmentation during programmed cell death in response to high levels of alpha-factor mating pheromone or the drug amiodarone. May be involved in sterol transfer between intracellular membranes. This chain is Membrane-anchored lipid-binding protein LAM1, found in Saccharomyces cerevisiae (strain ATCC 204508 / S288c) (Baker's yeast).